The sequence spans 504 residues: Hydroxyisobutyraldehyde dehydrogenase (504 aa).

The active-site Proton acceptor is the glutamate 260. Cysteine 294 acts as the Nucleophile in catalysis.

This sequence belongs to the aldehyde dehydrogenase family.

The protein resides in the cytoplasm. It carries out the reaction 2-hydroxy-2-methylpropanal + NAD(+) + H2O = 2-hydroxy-2-methylpropanoate + NADH + 2 H(+). Its function is as follows. Involved in the degradation of methyl tert-butyl ether (MTBE). Catalyzes the conversion of hydroxyisobutyraldehyde to hydroxyisobutyric acid (HIBA). The protein is Hydroxyisobutyraldehyde dehydrogenase of Mycolicibacterium austroafricanum (Mycobacterium austroafricanum).